The sequence spans 279 residues: NAD kinase (279 aa).

The active-site Proton acceptor is the Asp-63. NAD(+) contacts are provided by residues 63-64, Arg-68, 133-134, and Asp-163; these read DG and NE.

This sequence belongs to the NAD kinase family. A divalent metal cation serves as cofactor.

It localises to the cytoplasm. It carries out the reaction NAD(+) + ATP = ADP + NADP(+) + H(+). In terms of biological role, involved in the regulation of the intracellular balance of NAD and NADP, and is a key enzyme in the biosynthesis of NADP. Catalyzes specifically the phosphorylation on 2'-hydroxyl of the adenosine moiety of NAD to yield NADP. This chain is NAD kinase, found in Protochlamydia amoebophila (strain UWE25).